The primary structure comprises 822 residues: Dextranase (822 aa).

A signal peptide spans 1-38; it reads MTVNLTLQHASEIIGQDNVDLTLAAGASAKVSNLTVAS. 2 disordered regions span residues 607–669 and 683–788; these read EPVT…VDEL and ETAH…ETTS. The span at 619-636 shows a compositional bias: low complexity; the sequence is NTVTSEASSETAKSENTT. The span at 693–705 shows a compositional bias: polar residues; it reads SVSNTDQGTVASD. The segment covering 706-761 has biased composition (low complexity); it reads SITTPASEAASTAASTVSSEVSESVTVSSEPSETENSSEASTSESATPTTTAISES. Residues 771-788 are compositionally biased toward polar residues; the sequence is LTESESQASTSLVSETTS.

The protein belongs to the glycosyl hydrolase 66 family.

The enzyme catalyses Endohydrolysis of (1-&gt;6)-alpha-D-glucosidic linkages in dextran.. This Streptococcus salivarius protein is Dextranase (dex).